The chain runs to 630 residues: Subtilisin-like protease 1 (630 aa).

The signal sequence occupies residues 1–25 (MVLTRRAALLLCPWVIQLVIKRTLA). Residues 26-202 (GDILPNEGKK…IESDKLVGAD (177 aa)) constitute a propeptide, inhibition peptide. The disordered stretch occupies residues 72–125 (NAYNPDRDAPKEELQKLQDQQETPSKQPNNLRNSPQKRAEKKESPGKNKKSLRL). Basic and acidic residues predominate over residues 76-87 (PDRDAPKEELQK). The span at 94 to 107 (TPSKQPNNLRNSPQ) shows a compositional bias: polar residues. A compositionally biased stretch (basic and acidic residues) spans 108–117 (KRAEKKESPG). Positions 129, 130, 133, 135, and 190 each coordinate Ca(2+). Residues 230–254 (LEVPSGESPPSHAASSGSPFDDDDD) are disordered. The segment covering 233–248 (PSGESPPSHAASSGSP) has biased composition (low complexity). Asp281 provides a ligand contact to Ca(2+). Positions 287-604 (QWGLDLARLD…GGYVDILRAV (318 aa)) constitute a Peptidase S8 domain. 3 disulfides stabilise this stretch: Cys313–Cys423, Cys402–Cys419, and Cys465–Cys478. The Charge relay system role is filled by Asp316. 11 residues coordinate Ca(2+): Asp325, Glu336, Arg340, Val343, Asp344, Asp345, Asp346, Asn348, Val350, Asp352, and Asp353. His372 (charge relay system) is an active-site residue. Ca(2+) is bound by residues Val383, Asn386, Ile388, and Ile390. An N-linked (GlcNAc...) asparagine glycan is attached at Asn546. The active-site Charge relay system is the Ser549.

The protein belongs to the peptidase S8 family. Heterodimer between p54 form and prodomain p31; the interaction inhibits p54 catalytic activity. Heterodimer p31-p54 is monomeric at basic pH and dimeric at acidic pH; dimerization is driven by the N-terminal prodomain (p31). It depends on Ca(2+) as a cofactor. In terms of processing, the prodomain (p31) is cleaved, probably by autocatalysis, and remains non-covalently associated with the p54 form as an inhibitor. p54 is further cleaved into the p45/p47 forms. The relevance of the N-glycosylation is not clear. In an insect expression system, SUB1 glycosylation appears to affect its processing into the active mature form suggesting that SUB1 may not be N-glycosylated in parasites.

It is found in the secreted. The protein resides in the parasitophorous vacuole lumen. It carries out the reaction Hydrolysis of proteins with broad specificity for peptide bonds, and a preference for a large uncharged residue in P1. Hydrolyzes peptide amides.. Inhibited by peptidic alpha-ketoamide inhibitors. Inhibited by the alpha-ketoamide nonapeptide JMV5126 (isocaproyl-KITAQ(CO)DDEE-NH2). Inhibited by the alpha-ketoamide peptide MAM-117. Functionally, serine protease which plays an essential role in merozoite invasion of and egress from host erythrocytes by processing and activating various merozoite surface and parasitophorous vacuole proteins. In Plasmodium vivax, this protein is Subtilisin-like protease 1.